The following is a 387-amino-acid chain: S-adenosylmethionine synthase (387 aa).

An ATP-binding site is contributed by His-16. Position 18 (Asp-18) interacts with Mg(2+). Glu-44 contributes to the K(+) binding site. L-methionine contacts are provided by Glu-57 and Gln-100. Residues 100–110 (QSPDIAQGVDE) form a flexible loop region. Residues 167–169 (DAK), 232–233 (RF), Asp-241, 247–248 (RK), Ala-264, and Lys-268 each bind ATP. Asp-241 serves as a coordination point for L-methionine. Lys-272 provides a ligand contact to L-methionine.

Belongs to the AdoMet synthase family. Homotetramer; dimer of dimers. Mg(2+) serves as cofactor. It depends on K(+) as a cofactor.

Its subcellular location is the cytoplasm. It catalyses the reaction L-methionine + ATP + H2O = S-adenosyl-L-methionine + phosphate + diphosphate. Its pathway is amino-acid biosynthesis; S-adenosyl-L-methionine biosynthesis; S-adenosyl-L-methionine from L-methionine: step 1/1. Its function is as follows. Catalyzes the formation of S-adenosylmethionine (AdoMet) from methionine and ATP. The overall synthetic reaction is composed of two sequential steps, AdoMet formation and the subsequent tripolyphosphate hydrolysis which occurs prior to release of AdoMet from the enzyme. This is S-adenosylmethionine synthase from Janthinobacterium sp. (strain Marseille) (Minibacterium massiliensis).